Consider the following 185-residue polypeptide: Tumor necrosis factor receptor superfamily member 17 (185 aa).

Topologically, residues 1–49 (MAQQCFHSEYFDSLLHACKPCHLRCSNPPATCQPYCDPSVTSSVKGTYT) are extracellular. The TNFR-Cys repeat unit spans residues 4-36 (QCFHSEYFDSLLHACKPCHLRCSNPPATCQPYC). Cystine bridges form between C5/C18, C21/C32, and C25/C36. A helical; Signal-anchor for type III membrane protein membrane pass occupies residues 50 to 70 (VLWIFLGLTLVLSLALFTISF). Residues 71–185 (LLRKMNPEAL…MGMEKPTHTR (115 aa)) are Cytoplasmic-facing.

Associates with TRAF1, TRAF2, TRAF3, TRAF5 and TRAF6. As to expression, detected in spleen, thymus, bone marrow and heart, and at lower levels in kidney and lung.

The protein resides in the membrane. Receptor for TNFSF13B/BLyS/BAFF and TNFSF13/APRIL. Promotes B-cell survival and plays a role in the regulation of humoral immunity. Activates NF-kappa-B and JNK. The sequence is that of Tumor necrosis factor receptor superfamily member 17 (Tnfrsf17) from Mus musculus (Mouse).